The following is a 305-amino-acid chain: UDP-N-acetylenolpyruvoylglucosamine reductase (305 aa).

The 166-residue stretch at 33–198 (RVGGPAQVLF…TGGTFRGRRA (166 aa)) folds into the FAD-binding PCMH-type domain. Arg-178 is a catalytic residue. The Proton donor role is filled by Ser-227. Glu-297 is a catalytic residue.

Belongs to the MurB family. FAD serves as cofactor.

The protein resides in the cytoplasm. The enzyme catalyses UDP-N-acetyl-alpha-D-muramate + NADP(+) = UDP-N-acetyl-3-O-(1-carboxyvinyl)-alpha-D-glucosamine + NADPH + H(+). It functions in the pathway cell wall biogenesis; peptidoglycan biosynthesis. Cell wall formation. This is UDP-N-acetylenolpyruvoylglucosamine reductase from Nitrobacter hamburgensis (strain DSM 10229 / NCIMB 13809 / X14).